Here is a 146-residue protein sequence, read N- to C-terminus: Ferredoxin-thioredoxin reductase catalytic chain, chloroplastic (146 aa).

The N-terminal 26 residues, 1 to 26 (MMSMASTTASPFCPSPMPRGRKCTVR), are a transit peptide targeting the chloroplast. C85 provides a ligand contact to [4Fe-4S] cluster. Residue C87 is the Nucleophile of the active site. C87 and C117 form a disulfide bridge. The [4Fe-4S] cluster site is built by C104, C106, and C115.

This sequence belongs to the ferredoxin thioredoxin reductase beta subunit family. Heterodimer of subunit A (variable subunit) and subunit B (catalytic subunit). Heterodimeric FTR forms a complex with ferredoxin and thioredoxin. The cofactor is [4Fe-4S] cluster.

The protein localises to the plastid. It localises to the chloroplast. The enzyme catalyses [thioredoxin]-disulfide + 2 reduced [2Fe-2S]-[ferredoxin] + 2 H(+) = [thioredoxin]-dithiol + 2 oxidized [2Fe-2S]-[ferredoxin]. In terms of biological role, catalytic subunit of the ferredoxin-thioredoxin reductase (FTR), which catalyzes the two-electron reduction of thioredoxins by the electrons provided by reduced ferredoxin. The protein is Ferredoxin-thioredoxin reductase catalytic chain, chloroplastic of Oryza sativa subsp. japonica (Rice).